The following is a 681-amino-acid chain: PAB-dependent poly(A)-specific ribonuclease subunit pan3-like (681 aa).

Residues 9–38 (FSTNIPCRNEQLYGRCPYIDKGCFFQHKNQ) form a C3H1-type zinc finger. Disordered regions lie at residues 38 to 58 (QDNA…PQNS) and 82 to 123 (SSAS…TVSL). Low complexity predominate over residues 41–50 (APASSKPPSA). Residues 96–106 (KSYSSALSSGK) show a composition bias toward polar residues. Ser-165 bears the Phosphoserine mark.

This sequence belongs to the protein kinase superfamily. PAN3 family.

It is found in the cytoplasm. In terms of biological role, regulatory subunit of the poly(A)-nuclease (PAN) deadenylation complex. This is PAB-dependent poly(A)-specific ribonuclease subunit pan3-like from Schizosaccharomyces pombe (strain 972 / ATCC 24843) (Fission yeast).